Reading from the N-terminus, the 64-residue chain is Large ribosomal subunit protein bL33 (64 aa).

The protein belongs to the bacterial ribosomal protein bL33 family.

The chain is Large ribosomal subunit protein bL33 from Synechococcus elongatus (strain ATCC 33912 / PCC 7942 / FACHB-805) (Anacystis nidulans R2).